The following is a 45-amino-acid chain: EKGFGFISTENGQDVFAHFSAIQTNGFKTLEEGQKVEFDVEEGQR.

The 45-residue stretch at Glu-1–Arg-45 folds into the CSD domain.

As to quaternary structure, homodimer.

The protein localises to the cytoplasm. The polypeptide is Major cold shock protein (cspA) (Streptococcus dysgalactiae).